We begin with the raw amino-acid sequence, 206 residues long: 2,3-bisphosphoglycerate-dependent phosphoglycerate mutase (206 aa).

Residues 9–16 (RHGQSEWN), 22–23 (TG), arginine 61, 88–91 (ERDY), lysine 99, 115–116 (RR), and 159–160 (GN) each bind substrate. Histidine 10 serves as the catalytic Tele-phosphohistidine intermediate. Glutamate 88 (proton donor/acceptor) is an active-site residue.

This sequence belongs to the phosphoglycerate mutase family. BPG-dependent PGAM subfamily. As to quaternary structure, homodimer.

It catalyses the reaction (2R)-2-phosphoglycerate = (2R)-3-phosphoglycerate. It functions in the pathway carbohydrate degradation; glycolysis; pyruvate from D-glyceraldehyde 3-phosphate: step 3/5. Its function is as follows. Catalyzes the interconversion of 2-phosphoglycerate and 3-phosphoglycerate. This chain is 2,3-bisphosphoglycerate-dependent phosphoglycerate mutase, found in Mesorhizobium japonicum (strain LMG 29417 / CECT 9101 / MAFF 303099) (Mesorhizobium loti (strain MAFF 303099)).